Here is a 378-residue protein sequence, read N- to C-terminus: Ribosomal RNA large subunit methyltransferase G (378 aa).

Belongs to the methyltransferase superfamily. RlmG family.

It localises to the cytoplasm. The catalysed reaction is guanosine(1835) in 23S rRNA + S-adenosyl-L-methionine = N(2)-methylguanosine(1835) in 23S rRNA + S-adenosyl-L-homocysteine + H(+). Specifically methylates the guanine in position 1835 (m2G1835) of 23S rRNA. This chain is Ribosomal RNA large subunit methyltransferase G, found in Shewanella baltica (strain OS195).